The following is a 386-amino-acid chain: Lipid-A-disaccharide synthase (386 aa).

The protein belongs to the LpxB family.

The catalysed reaction is a lipid X + a UDP-2-N,3-O-bis[(3R)-3-hydroxyacyl]-alpha-D-glucosamine = a lipid A disaccharide + UDP + H(+). It functions in the pathway bacterial outer membrane biogenesis; LPS lipid A biosynthesis. Condensation of UDP-2,3-diacylglucosamine and 2,3-diacylglucosamine-1-phosphate to form lipid A disaccharide, a precursor of lipid A, a phosphorylated glycolipid that anchors the lipopolysaccharide to the outer membrane of the cell. The sequence is that of Lipid-A-disaccharide synthase from Chromobacterium violaceum (strain ATCC 12472 / DSM 30191 / JCM 1249 / CCUG 213 / NBRC 12614 / NCIMB 9131 / NCTC 9757 / MK).